A 487-amino-acid polypeptide reads, in one-letter code: Glycogen synthase 1 (487 aa).

Residue lysine 15 coordinates ADP-alpha-D-glucose.

Belongs to the glycosyltransferase 1 family. Bacterial/plant glycogen synthase subfamily.

It carries out the reaction [(1-&gt;4)-alpha-D-glucosyl](n) + ADP-alpha-D-glucose = [(1-&gt;4)-alpha-D-glucosyl](n+1) + ADP + H(+). It participates in glycan biosynthesis; glycogen biosynthesis. In terms of biological role, synthesizes alpha-1,4-glucan chains using ADP-glucose. The polypeptide is Glycogen synthase 1 (Nitrosococcus oceani (strain ATCC 19707 / BCRC 17464 / JCM 30415 / NCIMB 11848 / C-107)).